The sequence spans 395 residues: ASTRA-associated protein 1 (395 aa).

WD repeat units lie at residues 7 to 48 (AHVS…PIAS), 221 to 260 (HYPE…LPVV), and 343 to 386 (INPG…TGYN).

This sequence belongs to the WD repeat ASA1 family. Component of the ASTRA chromatin remodeling machinery complex.

The protein localises to the nucleus. Functionally, component of the ASTRA complex involved in chromatin remodeling. This chain is ASTRA-associated protein 1 (ASA1), found in Eremothecium gossypii (strain ATCC 10895 / CBS 109.51 / FGSC 9923 / NRRL Y-1056) (Yeast).